The following is an 82-amino-acid chain: ATP synthase subunit c, chloroplastic (82 aa).

2 consecutive transmembrane segments (helical) span residues 4 to 24 (IISA…AIGP) and 57 to 77 (LAFM…LLFA).

The protein belongs to the ATPase C chain family. In terms of assembly, F-type ATPases have 2 components, F(1) - the catalytic core - and F(0) - the membrane proton channel. F(1) has five subunits: alpha(3), beta(3), gamma(1), delta(1), epsilon(1). F(0) has four main subunits: a(1), b(1), b'(1) and c(10-14). The alpha and beta chains form an alternating ring which encloses part of the gamma chain. F(1) is attached to F(0) by a central stalk formed by the gamma and epsilon chains, while a peripheral stalk is formed by the delta, b and b' chains.

It is found in the plastid. The protein localises to the chloroplast thylakoid membrane. Its function is as follows. F(1)F(0) ATP synthase produces ATP from ADP in the presence of a proton or sodium gradient. F-type ATPases consist of two structural domains, F(1) containing the extramembraneous catalytic core and F(0) containing the membrane proton channel, linked together by a central stalk and a peripheral stalk. During catalysis, ATP synthesis in the catalytic domain of F(1) is coupled via a rotary mechanism of the central stalk subunits to proton translocation. Functionally, key component of the F(0) channel; it plays a direct role in translocation across the membrane. A homomeric c-ring of between 10-14 subunits forms the central stalk rotor element with the F(1) delta and epsilon subunits. The sequence is that of ATP synthase subunit c, chloroplastic from Antithamnion sp. (Red alga).